Consider the following 95-residue polypeptide: uncharacterized protein (95 aa).

Residues 12 to 32 form a helical membrane-spanning segment; that stretch reads IASLVVSVVVLLIGLILWFFI.

It localises to the cell membrane. This is an uncharacterized protein from Escherichia coli O157:H7.